We begin with the raw amino-acid sequence, 215 residues long: Putative lipoprotein NMB1124/NMB1162 (215 aa).

An N-terminal signal peptide occupies residues 1–16 (MKPLILGLAAVLALSA). Cysteine 17 carries the N-palmitoyl cysteine lipid modification. Cysteine 17 carries the S-diacylglycerol cysteine lipid modification.

The protein localises to the cell membrane. This Neisseria meningitidis serogroup B (strain ATCC BAA-335 / MC58) protein is Putative lipoprotein NMB1124/NMB1162.